A 523-amino-acid chain; its full sequence is Volkensin (523 aa).

Active-site residues include Tyr-74, Tyr-113, Glu-162, and Arg-165. 111-113 (GGY) contributes to the AMP binding site. Cystine bridges form between Cys-245/Cys-269 and Cys-285/Cys-304. Positions 251-265 (QSDSPLVIRSFVDRN) are cleaved as a propeptide — linker peptide. Residues 270–397 (PSGETTAFIV…YAASQAWRVT (128 aa)) enclose the Ricin B-type lectin 1 domain. Residues 287 to 291 (DVKVE), Gln-300, Lys-305, and Asn-311 contribute to the a carbohydrate site. A disulfide bridge links Cys-328 with Cys-343. 2 residues coordinate a carbohydrate: Asn-358 and Asn-398. Residues Asn-358 and Asn-398 are each glycosylated (N-linked (GlcNAc...) asparagine). Residues 400–523 (TVPTVTTIVG…HGNSNQQWFL (124 aa)) enclose the Ricin B-type lectin 2 domain. 2 disulfide bridges follow: Cys-414–Cys-427 and Cys-453–Cys-471.

It in the N-terminal section; belongs to the ribosome-inactivating protein family. Type 2 RIP subfamily. As to quaternary structure, disulfide-linked dimer of A and B chains. N-glycosylated. Contains mannose and galactose. As to expression, expressed in roots (at protein level). Expressed in seeds (at protein level).

It catalyses the reaction Endohydrolysis of the N-glycosidic bond at one specific adenosine on the 28S rRNA.. Hemagglutinating activity is inhibited by galactose and structurally related sugars. In terms of biological role, has N-glycosidase activity and is responsible for inhibiting protein synthesis through the catalytic inactivation of 60S ribosomal subunits by removing a specific adenine of 28S rRNA. Inhibits GTP-dependent binding of EF2 (elongation factor 2) to ribosomes. Binds to cell receptors and probably facilitates the entry into the cell of the A chain. Also acts as a galactose-specific lectin responsible for cell agglutination. The chain is Volkensin from Adenia volkensii (Kilyambiti plant).